An 80-amino-acid chain; its full sequence is Consomatin Mrc1 (80 aa).

Positions 1–22 (MQTAYWVMVMMMVWITAPLSEG) are cleaved as a signal peptide. A propeptide spanning residues 23–57 (GKLNDVIRGLVPDDVTPQLILRSLISRRPSDSVVR) is cleaved from the precursor. Cys-63 and Cys-68 are joined by a disulfide. A D-tryptophan modification is found at Trp-65. 4 positions are modified to 4-hydroxyproline: Pro-69, Pro-70, Pro-71, and Pro-72. A propeptide spanning residues 74-80 (RRPNGKG) is cleaved from the precursor.

It belongs to the conotoxin C superfamily. Consomatin family. In terms of tissue distribution, expressed by the venom duct.

Its subcellular location is the secreted. In terms of biological role, moderately activates human somatostatin receptors (SSTR) with a preferential activation of SSTR1 and SSTR4. In vivo, does not cause behavioral changes in mice within a few minutes of intracranial injection, but causes a progressive loss of movement thereafter. Four to five hours after injection, mice recover, even with the highest dose tested. Shows antinociception and antihyperalgesia activities in two mouse models of acute pain, most probably by acting outside the central nervous system. The protein is Consomatin Mrc1 of Conus mercator (Trader cone).